A 38-amino-acid chain; its full sequence is Photosystem II reaction center protein L (38 aa).

A helical membrane pass occupies residues 17-37 (SLFLGRLLIFVLGILFSSYIF).

It belongs to the PsbL family. PSII is composed of 1 copy each of membrane proteins PsbA, PsbB, PsbC, PsbD, PsbE, PsbF, PsbH, PsbI, PsbJ, PsbK, PsbL, PsbM, PsbT, PsbX, PsbY, PsbZ, Psb30/Ycf12, peripheral proteins PsbO, CyanoQ (PsbQ), PsbU, PsbV and a large number of cofactors. It forms dimeric complexes.

It localises to the cellular thylakoid membrane. One of the components of the core complex of photosystem II (PSII). PSII is a light-driven water:plastoquinone oxidoreductase that uses light energy to abstract electrons from H(2)O, generating O(2) and a proton gradient subsequently used for ATP formation. It consists of a core antenna complex that captures photons, and an electron transfer chain that converts photonic excitation into a charge separation. This subunit is found at the monomer-monomer interface and is required for correct PSII assembly and/or dimerization. In Prochlorothrix hollandica, this protein is Photosystem II reaction center protein L.